The chain runs to 628 residues: Very-long-chain aldehyde decarbonylase GL1-2 (628 aa).

5 consecutive transmembrane segments (helical) span residues 37-57 (GAAP…ARGL), 131-151 (GWAI…YWAH), 191-211 (VVIG…VGLV), 299-319 (DFVF…PFVL), and 331-351 (FVLL…WCCS). Residues 137-277 (LLHVLVAEPL…MPIFDLLGGT (141 aa)) enclose the Fatty acid hydroxylase domain.

It belongs to the sterol desaturase family. In terms of assembly, homodimer. Expressed in germinating seeds, radicals and leaves.

It is found in the endoplasmic reticulum membrane. The enzyme catalyses a long-chain fatty aldehyde + 2 NADPH + O2 + H(+) = a long-chain alkane + formate + 2 NADP(+) + H2O. Functionally, aldehyde decarbonylase involved in the conversion of aldehydes to alkanes. Core component of a very-long-chain alkane synthesis complex. Required for the formation of wax layers conferring cuticular permeability and drought tolerance. This is Very-long-chain aldehyde decarbonylase GL1-2 from Oryza sativa subsp. japonica (Rice).